Consider the following 149-residue polypeptide: 3-dehydroquinate dehydratase (149 aa).

Y22 serves as the catalytic Proton acceptor. The substrate site is built by N73, H79, and D86. H99 (proton donor) is an active-site residue. Substrate contacts are provided by residues L100–S101 and R110.

The protein belongs to the type-II 3-dehydroquinase family. Homododecamer.

The enzyme catalyses 3-dehydroquinate = 3-dehydroshikimate + H2O. The protein operates within metabolic intermediate biosynthesis; chorismate biosynthesis; chorismate from D-erythrose 4-phosphate and phosphoenolpyruvate: step 3/7. Functionally, catalyzes a trans-dehydration via an enolate intermediate. The chain is 3-dehydroquinate dehydratase from Prochlorococcus marinus (strain SARG / CCMP1375 / SS120).